We begin with the raw amino-acid sequence, 370 residues long: Actin-related protein 2/3 complex subunit 1A (370 aa).

WD repeat units lie at residues 6-45 (FLLE…WVKA), 50-89 (EHNG…WKPT), 140-179 (PIRS…VDEK), 202-241 (GTGG…QVST), 244-284 (TEFL…TFVS), and 322-365 (LHQN…SSIQ).

Belongs to the WD repeat ARPC1 family. Probable component of the Arp2/3 complex in which it may replace ARPC1B.

The protein localises to the cytoplasm. Its subcellular location is the cytoskeleton. The protein resides in the nucleus. Probably functions as a component of the Arp2/3 complex which is involved in regulation of actin polymerization and together with an activating nucleation-promoting factor (NPF) mediates the formation of branched actin networks. In addition to its role in the cytoplasmic cytoskeleton, the Arp2/3 complex also promotes actin polymerization in the nucleus, thereby regulating gene transcription and repair of damaged DNA. This is Actin-related protein 2/3 complex subunit 1A (ARPC1A) from Bos taurus (Bovine).